The chain runs to 325 residues: tRNA dimethylallyltransferase (325 aa).

16–23 (GPTASGKT) is a binding site for ATP. 18–23 (TASGKT) is a substrate binding site. Interaction with substrate tRNA regions lie at residues 41–44 (DSAL), 165–169 (QRIQR), 253–258 (RCVGYR), and 286–293 (KRQITWLR).

Belongs to the IPP transferase family. As to quaternary structure, monomer. Mg(2+) serves as cofactor.

The enzyme catalyses adenosine(37) in tRNA + dimethylallyl diphosphate = N(6)-dimethylallyladenosine(37) in tRNA + diphosphate. Functionally, catalyzes the transfer of a dimethylallyl group onto the adenine at position 37 in tRNAs that read codons beginning with uridine, leading to the formation of N6-(dimethylallyl)adenosine (i(6)A). The sequence is that of tRNA dimethylallyltransferase from Ralstonia pickettii (strain 12J).